The sequence spans 412 residues: Isocitrate dehydrogenase [NADP] (412 aa).

Thr100 serves as a coordination point for NADP(+). Ser109, Asn111, Arg115, Arg125, and Arg149 together coordinate D-threo-isocitrate. A Mg(2+)-binding site is contributed by Asp301. Residues 333 to 339, Asn346, Tyr385, and Arg389 each bind NADP(+); that span reads HGSAPKY.

It belongs to the isocitrate and isopropylmalate dehydrogenases family. Homodimer. Mg(2+) serves as cofactor. The cofactor is Mn(2+).

It carries out the reaction D-threo-isocitrate + NADP(+) = 2-oxoglutarate + CO2 + NADPH. Its function is as follows. Catalyzes the oxidative decarboxylation of isocitrate to 2-oxoglutarate and carbon dioxide with the concomitant reduction of NADP(+). NAD(+) can replace NADP(+) with low efficiency. In Archaeoglobus fulgidus (strain ATCC 49558 / DSM 4304 / JCM 9628 / NBRC 100126 / VC-16), this protein is Isocitrate dehydrogenase [NADP].